The sequence spans 79 residues: Large ribosomal subunit protein bL31 (79 aa).

Residues Cys-16, Cys-18, Cys-37, and Cys-40 each contribute to the Zn(2+) site.

It belongs to the bacterial ribosomal protein bL31 family. Type A subfamily. As to quaternary structure, part of the 50S ribosomal subunit. Zn(2+) is required as a cofactor.

In terms of biological role, binds the 23S rRNA. The chain is Large ribosomal subunit protein bL31 from Coxiella burnetii (strain CbuG_Q212) (Coxiella burnetii (strain Q212)).